A 260-amino-acid chain; its full sequence is Glutamate racemase (260 aa).

Residues 7–8 and 39–40 each bind substrate; these read DS and YG. Cys71 serves as the catalytic Proton donor/acceptor. Residue 72–73 participates in substrate binding; sequence NT. Cys182 serves as the catalytic Proton donor/acceptor. A substrate-binding site is contributed by 183–184; sequence TH.

It belongs to the aspartate/glutamate racemases family.

The enzyme catalyses L-glutamate = D-glutamate. It participates in cell wall biogenesis; peptidoglycan biosynthesis. Provides the (R)-glutamate required for cell wall biosynthesis. This is Glutamate racemase from Sulfurihydrogenibium sp. (strain YO3AOP1).